A 347-amino-acid polypeptide reads, in one-letter code: Phosphoribosylformylglycinamidine cyclo-ligase (347 aa).

Belongs to the AIR synthase family.

It is found in the cytoplasm. It carries out the reaction 2-formamido-N(1)-(5-O-phospho-beta-D-ribosyl)acetamidine + ATP = 5-amino-1-(5-phospho-beta-D-ribosyl)imidazole + ADP + phosphate + H(+). The protein operates within purine metabolism; IMP biosynthesis via de novo pathway; 5-amino-1-(5-phospho-D-ribosyl)imidazole from N(2)-formyl-N(1)-(5-phospho-D-ribosyl)glycinamide: step 2/2. The chain is Phosphoribosylformylglycinamidine cyclo-ligase from Dechloromonas aromatica (strain RCB).